Reading from the N-terminus, the 111-residue chain is BET1-like protein (111 aa).

Residues 1–86 (MADWTRAQSS…VARSGRDTRK (86 aa)) lie on the Cytoplasmic side of the membrane. Phosphoserine is present on residues Ser9 and Ser37. The t-SNARE coiled-coil homology domain occupies 15 to 77 (EIVDRENKRM…TGSVKRFSTV (63 aa)). Residues 87 to 107 (LLCGMAVVLIVAFFILSYLFS) traverse the membrane as a helical; Anchor for type IV membrane protein segment. Topologically, residues 108 to 111 (RTRT) are vesicular.

Component of a SNARE complex consisting of STX5, YKT6, GOSR1 and BET1L. Interacts with STX5. As to expression, widely expressed. Highest levels in heart, liver, skeletal muscle and kidney.

The protein resides in the golgi apparatus membrane. The protein localises to the golgi apparatus. It is found in the trans-Golgi network membrane. Functionally, vesicle SNARE required for targeting and fusion of retrograde transport vesicles with the Golgi complex. Required for the integrity of the Golgi complex. The polypeptide is BET1-like protein (Rattus norvegicus (Rat)).